A 232-amino-acid polypeptide reads, in one-letter code: U2 small nuclear ribonucleoprotein B'' (232 aa).

The RRM 1 domain maps to 10–89 (QSIYIQNLNE…KPMRLQYAKA (80 aa)). The tract at residues 100 to 157 (TFVPKDKKRKQEEKVERKREDSQRPNTANGPSANGPSANNGVPAPSFQPSGQETMPPN) is disordered. Over residues 108–122 (RKQEEKVERKREDSQ) the composition is skewed to basic and acidic residues. Composition is skewed to polar residues over residues 123 to 139 (RPNT…SANN) and 146 to 156 (FQPSGQETMPP). Positions 158–232 (NILFIQNLPH…NPMVISFAKK (75 aa)) constitute an RRM 2 domain.

Belongs to the RRM U1 A/B'' family. As to quaternary structure, component of the spliceosome where it is associated with snRNP U2.

The protein resides in the nucleus. Its subcellular location is the cajal body. It is found in the nucleoplasm. It localises to the cytoplasm. Its function is as follows. Involved in nuclear pre-mRNA splicing. This chain is U2 small nuclear ribonucleoprotein B'' (U2B''), found in Arabidopsis thaliana (Mouse-ear cress).